A 389-amino-acid chain; its full sequence is S-adenosylmethionine synthase (389 aa).

His-15 serves as a coordination point for ATP. Position 17 (Asp-17) interacts with Mg(2+). A K(+)-binding site is contributed by Glu-43. Positions 56 and 99 each coordinate L-methionine. The tract at residues 99–109 (QSSDIQYSIDH) is flexible loop. ATP contacts are provided by residues 166–168 (DAK), 232–233 (RF), Asp-241, 247–248 (RK), Ser-264, and Lys-268. Asp-241 is an L-methionine binding site. L-methionine is bound at residue Lys-272.

This sequence belongs to the AdoMet synthase family. Homotetramer; dimer of dimers. Requires Mg(2+) as cofactor. K(+) is required as a cofactor.

It is found in the cytoplasm. The catalysed reaction is L-methionine + ATP + H2O = S-adenosyl-L-methionine + phosphate + diphosphate. Its pathway is amino-acid biosynthesis; S-adenosyl-L-methionine biosynthesis; S-adenosyl-L-methionine from L-methionine: step 1/1. Its function is as follows. Catalyzes the formation of S-adenosylmethionine (AdoMet) from methionine and ATP. The overall synthetic reaction is composed of two sequential steps, AdoMet formation and the subsequent tripolyphosphate hydrolysis which occurs prior to release of AdoMet from the enzyme. The polypeptide is S-adenosylmethionine synthase (Blochmanniella pennsylvanica (strain BPEN)).